The chain runs to 389 residues: Probable protein phosphatase 2C 47 (389 aa).

A PPM-type phosphatase domain is found at 76 to 346 (RSGSFADIGP…DNLTVIVVCF (271 aa)). Positions 120, 121, 294, and 337 each coordinate Mn(2+).

This sequence belongs to the PP2C family. Requires Mg(2+) as cofactor. Mn(2+) is required as a cofactor.

It carries out the reaction O-phospho-L-seryl-[protein] + H2O = L-seryl-[protein] + phosphate. The enzyme catalyses O-phospho-L-threonyl-[protein] + H2O = L-threonyl-[protein] + phosphate. In Oryza sativa subsp. japonica (Rice), this protein is Probable protein phosphatase 2C 47.